The chain runs to 1398 residues: MRRMNELMKILGQTGQAMTFDQIKIQLASSEQIRSWSYGEIKKPETINYRTFKPERDGLFCARIFGPIKDYECLCGKYKRMKFRGIICEKCGVEVTLAKVRRERMGHIELASPVAHIWFLKSLPSRIGLMVDMTLKDLEKILYFESYVVLEPGTSPLKQFSLLTEDQYLDVMDEHGDDGIEVGIGAEAIKKVLERIDCKADKERLRQELKDTTSEAKRKKLVKRLKLIEAFADSESRPEWMIMDLIPVIPPELRPLVPLDGGRFATSDLNDLYRRVINRNNRLKRLIELRAPDIIVRNEKRMLQESVDALFDNGRRGRAITGANKRPLKSLSDMLKGKQGRFRQNLLGKRVDYSGRSVIVVGPELKLHQCGLPKKMALELFKPFIYSKLEKYGHATTIKAAKRMVEKERPEVWDILEEVIREHPVMLNRAPTLHRLGIQAFEPVLIEGKAIQLHPLVCTAFNADFDGDQMAVHVPLSLEAQLEARVLMMSTNNILSPANGKPIIVPSQDIVLGLYYLSLETPEFLATPDRNEYDAEGRLTVTGASSFATIGEVEYALSAGAIKLHDKIVARFDTVDAEGKPVRQTVITTPGRMLIAQILPRHPAIPFSLINKQLTKKNVSDVIDAVYRHCGQKECVIFCDRMMGLGFRHAAKAGISFGKDDMIIPAEKKVLVERTAAEVKEFEQQYQDGLITAGERYNKVVDAWSRCTDEVQAAMMKEISRQEVGKVTNSVWMMSHSGARGSPAQMKQLAGMRGLMAKPSGEIIEQPIIANFKEGLSVLDYFTSTHGARKGLADTALKTANSGYLTRRLVDVAQDCIIVEDDCGSERGLTVRAVMDGGEIVSSLSERILGRTVAADILDPATGEVLFKRDTLIEEAQAEKIEKAGVESVLIRSVLTCESRVGVCGLCYGRDLARGTPVNIGEAVGVIAAQSIGEPGTQLTMRTFHIGGAAQRGAEQSMVEASRDGHVTINNRTIVHNSQNVPIVMSRNCEIVLTDDKGVERARYRVPYGARLLVEEGAAVTRNQKLAEWDPYTLPIITEHSGTVEYLDLIDSITLVERMDEVTGLTSKVVVDYKQAAKGVDLRPRLQLKDANGHVIKLSNGNDARYFLSPDSLLSVENGAQVSAGDVLARIPREGSKTRDITGGLPRVAELFEARRPKDHAIISETDGRVEFGKDYKAKRRIIVKNDETGEETDYLIPKGKHVSVQEGDFVRVGDPLVDGPRVPHDILKVLGVEALSDYLVNEIQDVYRLQGVKINDKHIEVIVRQMLQKVEILEPGDTTYLIGETVDRIEFETENTKRLNMGERPAQAMPVLQGITKASLQTQSFISAASFQETTRVLTEAATAGKKDTLNGLKENVIVGRLIPAGTGSVMNKLRAIAAGQDRQRLAQARPVVSKAD.

4 residues coordinate Zn(2+): Cys-73, Cys-75, Cys-88, and Cys-91. Mg(2+) is bound by residues Asp-464, Asp-466, and Asp-468. Zn(2+) contacts are provided by Cys-823, Cys-897, Cys-904, and Cys-907.

This sequence belongs to the RNA polymerase beta' chain family. In terms of assembly, the RNAP catalytic core consists of 2 alpha, 1 beta, 1 beta' and 1 omega subunit. When a sigma factor is associated with the core the holoenzyme is formed, which can initiate transcription. Mg(2+) serves as cofactor. Requires Zn(2+) as cofactor.

It catalyses the reaction RNA(n) + a ribonucleoside 5'-triphosphate = RNA(n+1) + diphosphate. Its function is as follows. DNA-dependent RNA polymerase catalyzes the transcription of DNA into RNA using the four ribonucleoside triphosphates as substrates. This Gluconacetobacter diazotrophicus (strain ATCC 49037 / DSM 5601 / CCUG 37298 / CIP 103539 / LMG 7603 / PAl5) protein is DNA-directed RNA polymerase subunit beta'.